A 289-amino-acid chain; its full sequence is BTB/POZ domain-containing protein KCTD7 (289 aa).

Positions 1-42 (MVVVTGREPDSRHSDGAMSSSEAEDDFLEPATPTATQAGHGL) are disordered. The BTB domain occupies 53 to 141 (VPLNIGGAHF…YAIGPLLEQL (89 aa)).

Interacts with CUL3. High expression in brain, particularly in post-mitotic neurons. Expressed in the mitral cells of the olfactory bulbs, the hippocampus, the deep layers of the cerebral cortex and Purkinje cells of the cerebellum. Not detected in astrocytes or microglial cells. Also expressed in heart, liver, spleen and kidney.

The protein resides in the cell membrane. It is found in the cytoplasm. It localises to the cytosol. Its function is as follows. May be involved in the control of excitability of cortical neurons. The protein is BTB/POZ domain-containing protein KCTD7 (Kctd7) of Mus musculus (Mouse).